We begin with the raw amino-acid sequence, 50 residues long: Large ribosomal subunit protein bL33B (50 aa).

It belongs to the bacterial ribosomal protein bL33 family.

This chain is Large ribosomal subunit protein bL33B, found in Ligilactobacillus salivarius (strain UCC118) (Lactobacillus salivarius).